Here is a 67-residue protein sequence, read N- to C-terminus: Large ribosomal subunit protein uL29 (67 aa).

The protein belongs to the universal ribosomal protein uL29 family.

The sequence is that of Large ribosomal subunit protein uL29 from Rhizorhabdus wittichii (strain DSM 6014 / CCUG 31198 / JCM 15750 / NBRC 105917 / EY 4224 / RW1) (Sphingomonas wittichii).